The sequence spans 76 residues: Monocarboxylate transporter 1 (76 aa).

A run of 3 helical transmembrane segments spans residues 1 to 18 (LSILAFVDMVARPSMGLA), 28 to 48 (IQYFFAASVVANGVCHLLAPL), and 53 to 73 (IGFCVYAGVFGFAFGWLSSVL). A H(+)-binding site is contributed by aspartate 8. (S)-lactate is bound at residue arginine 12.

It belongs to the major facilitator superfamily. Monocarboxylate porter (TC 2.A.1.13) family. As to quaternary structure, interacts with BSG; interaction mediates SLC16A1 targeting to the plasma membrane. Interacts with EMB; interaction mediates SLC16A1 targeting to the plasma membrane.

The protein localises to the cell membrane. The protein resides in the basolateral cell membrane. It is found in the apical cell membrane. It carries out the reaction (S)-lactate(in) + H(+)(in) = (S)-lactate(out) + H(+)(out). The catalysed reaction is acetate(out) + H(+)(out) = acetate(in) + H(+)(in). The enzyme catalyses acetoacetate(out) + H(+)(out) = acetoacetate(in) + H(+)(in). It catalyses the reaction pyruvate(out) + H(+)(out) = pyruvate(in) + H(+)(in). It carries out the reaction (R)-3-hydroxybutanoate(out) + H(+)(out) = (R)-3-hydroxybutanoate(in) + H(+)(in). The catalysed reaction is 3-methyl-2-oxobutanoate(out) + H(+)(out) = 3-methyl-2-oxobutanoate(in) + H(+)(in). The enzyme catalyses 4-methyl-2-oxopentanoate(out) + H(+)(out) = 4-methyl-2-oxopentanoate(in) + H(+)(in). It catalyses the reaction succinate(in) + 2 H(+)(in) = succinate(out) + 2 H(+)(out). In terms of biological role, bidirectional proton-coupled monocarboxylate transporter. Catalyzes the rapid transport across the plasma membrane of many monocarboxylates such as lactate, pyruvate, acetate and the ketone bodies acetoacetate and beta-hydroxybutyrate, and thus contributes to the maintenance of intracellular pH. The transport direction is determined by the proton motive force and the concentration gradient of the substrate monocarboxylate. MCT1 is a major lactate exporter. Plays a role in cellular responses to a high-fat diet by modulating the cellular levels of lactate and pyruvate that contribute to the regulation of central metabolic pathways and insulin secretion, with concomitant effects on plasma insulin levels and blood glucose homeostasis. Facilitates the protonated monocarboxylate form of succinate export, that its transient protonation upon muscle cell acidification in exercising muscle and ischemic heart. Functions via alternate outward- and inward-open conformation states. Protonation and deprotonation is essential for the conformational transition. This Meriones unguiculatus (Mongolian jird) protein is Monocarboxylate transporter 1 (SLC16A1).